The following is a 78-amino-acid chain: NEDD8-like protein RUB3 (78 aa).

G76 participates in a covalent cross-link: Glycyl lysine isopeptide (Gly-Lys) (interchain with K-? in acceptor proteins). Residues 77–78 (CC) constitute a propeptide that is removed on maturation.

Detected in stems and flower buds, but not in leaves, mature flowers and seedlings.

In terms of biological role, may function as a stable post-translational protein modifier. In Arabidopsis thaliana (Mouse-ear cress), this protein is NEDD8-like protein RUB3 (RUB3).